A 417-amino-acid polypeptide reads, in one-letter code: Serine hydroxymethyltransferase (417 aa).

(6S)-5,6,7,8-tetrahydrofolate is bound by residues leucine 121 and 125-127; that span reads GHL. Lysine 229 is modified (N6-(pyridoxal phosphate)lysine). 355–357 contributes to the (6S)-5,6,7,8-tetrahydrofolate binding site; that stretch reads SPF.

Belongs to the SHMT family. Homodimer. The cofactor is pyridoxal 5'-phosphate.

Its subcellular location is the cytoplasm. It carries out the reaction (6R)-5,10-methylene-5,6,7,8-tetrahydrofolate + glycine + H2O = (6S)-5,6,7,8-tetrahydrofolate + L-serine. It functions in the pathway one-carbon metabolism; tetrahydrofolate interconversion. The protein operates within amino-acid biosynthesis; glycine biosynthesis; glycine from L-serine: step 1/1. Functionally, catalyzes the reversible interconversion of serine and glycine with tetrahydrofolate (THF) serving as the one-carbon carrier. This reaction serves as the major source of one-carbon groups required for the biosynthesis of purines, thymidylate, methionine, and other important biomolecules. Also exhibits THF-independent aldolase activity toward beta-hydroxyamino acids, producing glycine and aldehydes, via a retro-aldol mechanism. The protein is Serine hydroxymethyltransferase of Buchnera aphidicola subsp. Acyrthosiphon pisum (strain APS) (Acyrthosiphon pisum symbiotic bacterium).